The chain runs to 416 residues: Cotranscriptional regulator ARB2A (416 aa).

Residues 1 to 18 form the signal peptide; it reads MSISLSSLILLPIWINMA. The disordered stretch occupies residues 208-247; it reads KPKIHVQSSSDSSDEPAEKRERKDKVSKETKKRRDFYEKY. Positions 223–236 are enriched in basic and acidic residues; sequence PAEKRERKDKVSKE. Ser293 acts as the Nucleophile in catalysis. A Prevents secretion from ER motif is present at residues 413-416; sequence HEEL.

The protein belongs to the ARB2A family. As to quaternary structure, interacts with AGO2. Found in a complex, composed of AGO2, CHD7 and ARB2A.

The protein localises to the nucleus. Its subcellular location is the cytoplasm. It localises to the endoplasmic reticulum. Plays a role in the regulation of alternative splicing, by interacting with AGO2 and CHD7. Seems to be required for stabilizing protein-protein interactions at the chromatin-spliceosome interface. May have hydrolase activity. This is Cotranscriptional regulator ARB2A from Homo sapiens (Human).